We begin with the raw amino-acid sequence, 495 residues long: Two-component response regulator-like APRR3 (495 aa).

A Response regulatory domain is found at Lys65–Trp183. Disordered regions lie at residues Ser188 to Gln441 and His465 to Asn495. Residues Pro206 to Ser217 show a composition bias toward polar residues. A compositionally biased stretch (low complexity) spans Gly231–Ser248. Positions Thr256 to Phe265 are enriched in polar residues. Residues Arg284–Glu293 show a composition bias toward basic and acidic residues. Residues Gln294–Ser304 show a composition bias toward polar residues. Basic and acidic residues predominate over residues Lys307 to Ala319. Polar residues predominate over residues Asn335 to Ser350. A coiled-coil region spans residues Ser349–Lys372. Residues Asn351–Val378 show a composition bias toward basic and acidic residues. Composition is skewed to polar residues over residues Arg380 to Thr395 and Gly420 to Ser436. The CCT domain occupies Arg442–Lys484. The segment covering Arg483–Asn495 has biased composition (basic and acidic residues).

This sequence belongs to the ARR-like family. As to quaternary structure, interacts with APRR1/TOC1 (via N-terminus). In terms of processing, phosphorylated by WNK1; during the night. Phosphorylation is required for optimal interaction with APRR1/TOC1.

It localises to the nucleus. Functionally, controls photoperiodic flowering response. Component of the circadian clock. Controls the degradation of APRR1/TOC1 by the SCF(ZTL) complex. Expression of several members of the ARR-like family is controlled by circadian rhythm. The particular coordinated sequential expression of APRR9, APRR7, APRR5, APRR3 and APPR1 result to circadian waves that may be at the basis of the endogenous circadian clock. This Arabidopsis thaliana (Mouse-ear cress) protein is Two-component response regulator-like APRR3 (APRR3).